A 159-amino-acid polypeptide reads, in one-letter code: Ribosomal RNA large subunit methyltransferase H (159 aa).

S-adenosyl-L-methionine contacts are provided by residues leucine 76, glycine 108, and 127–132 (FSKMTL).

Belongs to the RNA methyltransferase RlmH family. As to quaternary structure, homodimer.

It localises to the cytoplasm. It carries out the reaction pseudouridine(1915) in 23S rRNA + S-adenosyl-L-methionine = N(3)-methylpseudouridine(1915) in 23S rRNA + S-adenosyl-L-homocysteine + H(+). Specifically methylates the pseudouridine at position 1915 (m3Psi1915) in 23S rRNA. The protein is Ribosomal RNA large subunit methyltransferase H of Bacillus anthracis (strain CDC 684 / NRRL 3495).